Here is a 764-residue protein sequence, read N- to C-terminus: Putative wall-associated receptor kinase-like 13 (764 aa).

An N-terminal signal peptide occupies residues Met1–Cys26. Residues Thr27–Glu379 lie on the Extracellular side of the membrane. 8 N-linked (GlcNAc...) asparagine glycosylation sites follow: Asn78, Asn114, Asn121, Asn164, Asn233, Asn238, Asn259, and Asn283. An atypical EGF-like region spans residues Cys308–Cys372. 3 disulfides stabilise this stretch: Cys310-Cys323, Cys345-Cys363, and Cys352-Cys372. An N-linked (GlcNAc...) asparagine glycan is attached at Asn365. Residues Val380–Trp400 traverse the membrane as a helical segment. At Arg401–Met764 the chain is on the cytoplasmic side. Residues Phe454 to Ile728 form the Protein kinase domain. Residues Ile460 to Val468 and Lys482 contribute to the ATP site. Tyr527 bears the Phosphotyrosine mark. The Proton acceptor role is filled by Asp579. Residues Thr613 and Thr618 each carry the phosphothreonine modification. A Phosphotyrosine modification is found at Tyr626.

Belongs to the protein kinase superfamily. Ser/Thr protein kinase family.

The protein resides in the membrane. It catalyses the reaction L-seryl-[protein] + ATP = O-phospho-L-seryl-[protein] + ADP + H(+). It carries out the reaction L-threonyl-[protein] + ATP = O-phospho-L-threonyl-[protein] + ADP + H(+). In terms of biological role, putative serine/threonine-protein kinase that may function as a signaling receptor of extracellular matrix component. The sequence is that of Putative wall-associated receptor kinase-like 13 (WAKL13) from Arabidopsis thaliana (Mouse-ear cress).